The sequence spans 530 residues: uncharacterized protein (530 aa).

The disordered stretch occupies residues 1–33; the sequence is MNNMSLKFPDIAINSSESSDDEDPSSKNEKKDG. Over residues 24-33 the composition is skewed to basic and acidic residues; the sequence is PSSKNEKKDG. The next 12 helical transmembrane spans lie at 83-103, 124-144, 147-167, 181-201, 211-231, 244-264, 323-343, 346-366, 375-395, 404-424, 436-456, and 471-491; these read FFILPIMCITYGMQYLDKTAV, WLSTIFYLGYMIAQYPAGYLL, FPISYFMFIAAFLWSACVLLM, FFSGVFEGCVNPAFVALTAMW, VVSWYAFNGVAIMVGALLGYG, YPFLVIGAISTAWSFVYLFFP, VTNAMSVFSALIIQGIGYSGI, TLLTLPSGAFAVAGMIASGIF, IPLAMTTSSLTIVGSIMIWKI, VVGVWLFCTISSGNAVILSLL, TVNATMFLFYSIGNIVSPQLF, and SLVSVCLFEGVLALLAFYYIF.

The protein belongs to the major facilitator superfamily. Allantoate permease family.

It localises to the endoplasmic reticulum. It is found in the membrane. This is an uncharacterized protein from Schizosaccharomyces pombe (strain 972 / ATCC 24843) (Fission yeast).